Reading from the N-terminus, the 1330-residue chain is DNA-directed RNA polymerase subunit beta'' (1330 aa).

Zn(2+)-binding residues include cysteine 214, cysteine 282, cysteine 289, and cysteine 292.

The protein belongs to the RNA polymerase beta' chain family. RpoC2 subfamily. In plastids the minimal PEP RNA polymerase catalytic core is composed of four subunits: alpha, beta, beta', and beta''. When a (nuclear-encoded) sigma factor is associated with the core the holoenzyme is formed, which can initiate transcription. It depends on Zn(2+) as a cofactor.

It localises to the plastid. Its subcellular location is the chloroplast. It carries out the reaction RNA(n) + a ribonucleoside 5'-triphosphate = RNA(n+1) + diphosphate. In terms of biological role, DNA-dependent RNA polymerase catalyzes the transcription of DNA into RNA using the four ribonucleoside triphosphates as substrates. The chain is DNA-directed RNA polymerase subunit beta'' from Physcomitrium patens (Spreading-leaved earth moss).